A 918-amino-acid polypeptide reads, in one-letter code: MASGSGSSSSTSSSALSGRLPGSRSANPRKARILGLFDAIQDAVGPPKQAAADRRTVEKTWKLMDKVVRLCQNPKLQLKNSPPYILDILPDTYQHLRLILSKYDDNQKLAQLSENEYFKIYIDSLIKKSKRAMRLFKEGKERMYEEQSQERRNLTKLSLIFSHMLAEIKAIFPSGQFQGDNFRITKADAAEFWRKFFGERTIVPWKIFRQCLHEVHQISSGLEAMALKSTIDLTCNDYISVFEFDIFTRLFQPWGSILRNWNFLAVTHPGYMAFLTYDEVKARLQKYSLKPGSYIFRLSCTRLGQWAIGYVTADGNILQTIPHNKPLFQALIDGSREGFYLYPDGRSYNPDLTGLCEPTPHDHIKVTQEQYELYCEMGSTFQLCKICAENDKDVKIEPCGHLMCTSCLTSWQESDGQGCPFCRCEIKGMEPIIVDPFDPRDESRCFSFSDSLCTPMLDFDDDDLREECLIMNRLAALRKMNERQNSPVTSPGSSPLSQRRKTPPEPLQIPHLNLPPVPPRLDLIQKGLARSPCASPTGSPKSSPCMVRKQDKPLPAPPPLLREPPPPPERPPPIPPDSRTCRHLHHADNVPCRDQSTPHEAWCTRDLSGGNPASVCRVTHDGSPKLGVPSSSVLNGRHSRMSTEAGFMRHKHHKRRESPLETLRVYNGLSGNEEYDVPPRLSPPTITIHPIVKCPVLVNSVSDKVRNSAEEDDCEYKIPSSHPVSSRLPLHCHSIKHFPRLCENGQCLSNGTHNGISEIKKLKPPDQGDVIATSTVPIHFPPARTSARENHPHGSSLTRTPSDYDLLVPHPGEESFDISPPSQPPPPPPARTCVTEHVMPTALGSRPNSDVDLFLPHSDPCPEAPLPPARRGPGEVKSNRLSQEYDQLPSCPGKGQEKASNTKGELLLPNQNLIMRPT.

Low complexity predominate over residues 1-18 (MASGSGSSSSTSSSALSG). The tract at residues 1–27 (MASGSGSSSSTSSSALSGRLPGSRSAN) is disordered. The tract at residues 46–178 (PPKQAAADRR…KAIFPSGQFQ (133 aa)) is 4H. Positions 46-354 (PPKQAAADRR…GRSYNPDLTG (309 aa)) constitute a Cbl-PTB domain. Positions 179–251 (GDNFRITKAD…FEFDIFTRLF (73 aa)) are EF-hand-like. Ca(2+) contacts are provided by aspartate 232, threonine 234, asparagine 236, tyrosine 238, and glutamate 243. The SH2-like stretch occupies residues 252–354 (QPWGSILRNW…GRSYNPDLTG (103 aa)). A 4-O-phospho-L-tyrosine-binding site is contributed by arginine 297. The tract at residues 355–383 (LCEPTPHDHIKVTQEQYELYCEMGSTFQL) is linker. The segment at 384 to 423 (CKICAENDKDVKIEPCGHLMCTSCLTSWQESDGQGCPFCR) adopts an RING-type zinc-finger fold. 3 disordered regions span residues 481-582 (NERQ…RTCR), 780-831 (FPPA…PPAR), and 857-918 (HSDP…MRPT). The span at 483–497 (RQNSPVTSPGSSPLS) shows a compositional bias: polar residues. Composition is skewed to pro residues over residues 554 to 576 (LPAPPPLLREPPPPPERPPPIPP) and 821 to 830 (PSQPPPPPPA). Positions 898-918 (KASNTKGELLLPNQNLIMRPT) are enriched in polar residues.

As to quaternary structure, interacts with several SH3 domain-containing proteins and with poly-ubiquitinated proteins.

The protein localises to the cytoplasm. The enzyme catalyses S-ubiquitinyl-[E2 ubiquitin-conjugating enzyme]-L-cysteine + [acceptor protein]-L-lysine = [E2 ubiquitin-conjugating enzyme]-L-cysteine + N(6)-ubiquitinyl-[acceptor protein]-L-lysine.. Its pathway is protein modification; protein ubiquitination. In terms of biological role, E3 ubiquitin-protein ligase which accepts ubiquitin from specific E2 ubiquitin-conjugating enzymes, and transfers it to substrates, generally promoting their degradation by the proteasome. In Xenopus laevis (African clawed frog), this protein is E3 ubiquitin-protein ligase CBL-B-A (cblb-a).